The sequence spans 362 residues: Peptide chain release factor 1 (362 aa).

At Q235 the chain carries N5-methylglutamine.

It belongs to the prokaryotic/mitochondrial release factor family. Post-translationally, methylated by PrmC. Methylation increases the termination efficiency of RF1.

The protein localises to the cytoplasm. Functionally, peptide chain release factor 1 directs the termination of translation in response to the peptide chain termination codons UAG and UAA. The chain is Peptide chain release factor 1 from Variovorax paradoxus (strain S110).